A 493-amino-acid polypeptide reads, in one-letter code: Probable cytosol aminopeptidase (493 aa).

Residues Lys-260 and Asp-265 each coordinate Mn(2+). Lys-272 is a catalytic residue. Asp-284, Asp-343, and Glu-345 together coordinate Mn(2+). Arg-347 is an active-site residue.

Belongs to the peptidase M17 family. Requires Mn(2+) as cofactor.

The protein resides in the cytoplasm. It catalyses the reaction Release of an N-terminal amino acid, Xaa-|-Yaa-, in which Xaa is preferably Leu, but may be other amino acids including Pro although not Arg or Lys, and Yaa may be Pro. Amino acid amides and methyl esters are also readily hydrolyzed, but rates on arylamides are exceedingly low.. The enzyme catalyses Release of an N-terminal amino acid, preferentially leucine, but not glutamic or aspartic acids.. Functionally, presumably involved in the processing and regular turnover of intracellular proteins. Catalyzes the removal of unsubstituted N-terminal amino acids from various peptides. The protein is Probable cytosol aminopeptidase of Nostoc punctiforme (strain ATCC 29133 / PCC 73102).